The following is a 237-amino-acid chain: Demethylmenaquinone methyltransferase (237 aa).

S-adenosyl-L-methionine contacts are provided by residues Thr58, Asp79, and 107-108; that span reads NA.

Belongs to the class I-like SAM-binding methyltransferase superfamily. MenG/UbiE family.

The catalysed reaction is a 2-demethylmenaquinol + S-adenosyl-L-methionine = a menaquinol + S-adenosyl-L-homocysteine + H(+). Its pathway is quinol/quinone metabolism; menaquinone biosynthesis; menaquinol from 1,4-dihydroxy-2-naphthoate: step 2/2. Its function is as follows. Methyltransferase required for the conversion of demethylmenaquinol (DMKH2) to menaquinol (MKH2). The sequence is that of Demethylmenaquinone methyltransferase from Lactiplantibacillus plantarum (strain ATCC BAA-793 / NCIMB 8826 / WCFS1) (Lactobacillus plantarum).